We begin with the raw amino-acid sequence, 339 residues long: Cilia- and flagella-associated protein 36 (339 aa).

Coiled coils occupy residues 142–188 (ISDL…ENKQ) and 255–330 (NLSQ…EVIL). 2 disordered regions span residues 177 to 212 (NLTL…EKQP) and 281 to 318 (KKQE…QRRK). Over residues 187-200 (KQSSGSERTPNNTE) the composition is skewed to polar residues. Residues 281–313 (KKQESKKMAQNSEEHEEKATCSKQEMTEEEKKS) are compositionally biased toward basic and acidic residues.

It belongs to the CFAP36 family.

Its subcellular location is the nucleus. The protein resides in the cytoplasm. The protein localises to the cell projection. It is found in the cilium. It localises to the flagellum. This is Cilia- and flagella-associated protein 36 from Xenopus tropicalis (Western clawed frog).